The sequence spans 90 residues: Probable Fe(2+)-trafficking protein (90 aa).

Belongs to the Fe(2+)-trafficking protein family.

In terms of biological role, could be a mediator in iron transactions between iron acquisition and iron-requiring processes, such as synthesis and/or repair of Fe-S clusters in biosynthetic enzymes. This chain is Probable Fe(2+)-trafficking protein, found in Photobacterium profundum (strain SS9).